A 101-amino-acid polypeptide reads, in one-letter code: MKLDSRDLVDIIKNPVVTEKATRLMELNQYTFDVDPRATKPMIKQVIEQIFEVKVIGINTLNLPRKKRRVGKYIGFKPRYKRAIVTLEDGEPIRKVLFPDL.

It belongs to the universal ribosomal protein uL23 family. Part of the 50S ribosomal subunit. Contacts protein L29, and trigger factor when it is bound to the ribosome.

Functionally, one of the early assembly proteins it binds 23S rRNA. One of the proteins that surrounds the polypeptide exit tunnel on the outside of the ribosome. Forms the main docking site for trigger factor binding to the ribosome. This Trichodesmium erythraeum (strain IMS101) protein is Large ribosomal subunit protein uL23.